A 709-amino-acid chain; its full sequence is Fatty acid oxidation complex subunit alpha (709 aa).

The segment at 1-188 (MEKTFNLTRR…KMGLVNDVVP (188 aa)) is enoyl-CoA hydratase. A 3-hydroxyacyl-CoA dehydrogenase region spans residues 308–709 (RKVKKAVILG…EMAAEKTRFF (402 aa)).

The protein in the N-terminal section; belongs to the enoyl-CoA hydratase/isomerase family. It in the central section; belongs to the 3-hydroxyacyl-CoA dehydrogenase family. Heterotetramer of two alpha chains (FadJ) and two beta chains (FadI).

The protein resides in the cytoplasm. It catalyses the reaction a (3S)-3-hydroxyacyl-CoA = a (2E)-enoyl-CoA + H2O. The catalysed reaction is a 4-saturated-(3S)-3-hydroxyacyl-CoA = a (3E)-enoyl-CoA + H2O. The enzyme catalyses a (3S)-3-hydroxyacyl-CoA + NAD(+) = a 3-oxoacyl-CoA + NADH + H(+). It carries out the reaction (3S)-3-hydroxybutanoyl-CoA = (3R)-3-hydroxybutanoyl-CoA. It functions in the pathway lipid metabolism; fatty acid beta-oxidation. Its function is as follows. Catalyzes the formation of a hydroxyacyl-CoA by addition of water on enoyl-CoA. Also exhibits 3-hydroxyacyl-CoA epimerase and 3-hydroxyacyl-CoA dehydrogenase activities. The protein is Fatty acid oxidation complex subunit alpha of Shewanella sp. (strain MR-4).